A 68-amino-acid chain; its full sequence is MPKMKSHSGTKKRFKVTGSGKVTARKAGKRHLNEHKSSRVTRRLTGETVLSKGEAAKVKKLLAGHPGR.

Basic residues-rich tracts occupy residues 1–15 (MPKM…KRFK) and 23–38 (TARK…HKSS). Residues 1-38 (MPKMKSHSGTKKRFKVTGSGKVTARKAGKRHLNEHKSS) form a disordered region.

It belongs to the bacterial ribosomal protein bL35 family.

The protein is Large ribosomal subunit protein bL35 of Cutibacterium acnes (strain DSM 16379 / KPA171202) (Propionibacterium acnes).